We begin with the raw amino-acid sequence, 132 residues long: uncharacterized protein (132 aa).

Helical transmembrane passes span 6 to 26, 34 to 54, 59 to 79, and 106 to 126; these read WIYA…RAFS, NTYL…GFLF, TMIT…SQLY, and IEAY…VLGI.

The protein localises to the cell membrane. This is an uncharacterized protein from Bacillus subtilis (strain 168).